A 230-amino-acid polypeptide reads, in one-letter code: RING finger protein 141 (230 aa).

The N-myristoyl glycine moiety is linked to residue Gly2. Residues 155–192 (CCICMDGRADLILPCAHSFCQKCIDKWSDRHRNCPICR) form an RING-type zinc finger.

It localises to the membrane. Functionally, may be involved in spermatogenesis. The polypeptide is RING finger protein 141 (RNF141) (Bos taurus (Bovine)).